The sequence spans 167 residues: Putative pre-16S rRNA nuclease (167 aa).

Belongs to the YqgF nuclease family.

The protein localises to the cytoplasm. Could be a nuclease involved in processing of the 5'-end of pre-16S rRNA. The polypeptide is Putative pre-16S rRNA nuclease (Streptomyces coelicolor (strain ATCC BAA-471 / A3(2) / M145)).